The following is a 205-amino-acid chain: Retron Vc95 putative HNH endonuclease (205 aa).

Its function is as follows. Putative HNH endonuclease component of antiviral defense system retron Vc95, composed of a non-coding RNA (ncRNA), a reverse transcriptase (RT), a probable ATP-binding protein and this protein. Expression of retron Vc95 confers protection against bacteriophages T2, T4 and T6. At multiplicity of infection (MOI) of 0.02 cultures slow growth when infected with T4 but do not collapse, at MOI 2 cultures enter growth stasis. The sequence is that of Retron Vc95 putative HNH endonuclease from Vibrio cholerae serotype O1 biovar El Tor.